A 94-amino-acid chain; its full sequence is MLKPLGDRVVIRVAKEEEKTVGGIVLASVAKEKPQTGEVIAVGEGRVLENGTKVPMEVKIGDTVMFEKYSGTEVKYEGVEYLIVSAKDIIATVE.

It belongs to the GroES chaperonin family. As to quaternary structure, heptamer of 7 subunits arranged in a ring. Interacts with the chaperonin GroEL.

Its subcellular location is the cytoplasm. In terms of biological role, together with the chaperonin GroEL, plays an essential role in assisting protein folding. The GroEL-GroES system forms a nano-cage that allows encapsulation of the non-native substrate proteins and provides a physical environment optimized to promote and accelerate protein folding. GroES binds to the apical surface of the GroEL ring, thereby capping the opening of the GroEL channel. The chain is Co-chaperonin GroES from Enterococcus faecalis (strain ATCC 700802 / V583).